The primary structure comprises 102 residues: Circadian clock oscillator protein KaiA (102 aa).

The KaiA C-terminal domain occupies 1-102; the sequence is MTQEVDQQIL…CEAYRGAIFK (102 aa).

This sequence belongs to the KaiA family. As to quaternary structure, homodimer. The KaiABC complex composition changes during the circadian cycle to control KaiC phosphorylation. Complexes KaiC(6), KaiA(2-4):KaiC(6), KaiB(6):KaiC(6) and KaiC(6):KaiB(6):KaiA(12) are among the most important forms, many form cooperatively. KaiA and CikA bind to the same region of the KaiB(fs) form and therefore compete.

Functionally, key component of the KaiABC oscillator complex, which constitutes the main circadian regulator in cyanobacteria. Complex composition changes during the circadian cycle to control KaiC phosphorylation. KaiA stimulates KaiC autophosphorylation, while KaiB sequesters KaiA, leading to KaiC autodephosphorylation. KaiA binding to the KaiC CII domain during the subjective day yields KaiA(2-4):KaiC(6) complexes which stimulate KaiC autophosphorylation. Phospho-Ser-431 KaiC accumulation triggers binding of KaiB during the subjective night to form the KaiB(6):KaiC(6) complex, leading to changes in the output regulators CikA and SasA. KaiB(6):KaiC(6) formation exposes a site for KaiA binding on KaiB that sequesters KaiA from KaiC's CII domain, making the KaiC(6):KaiB(6):KaiA(12) complex resulting in KaiC autodephosphorylation. Complete dephosphorylation of KaiC leads to dissociation of KaiA(2):KaiB(1), completing 1 cycle of the Kai oscillator. In Nostoc sp. (strain PCC 7120 / SAG 25.82 / UTEX 2576), this protein is Circadian clock oscillator protein KaiA.